The following is a 968-amino-acid chain: Glycine dehydrogenase (decarboxylating) (968 aa).

Lysine 713 carries the N6-(pyridoxal phosphate)lysine modification.

Belongs to the GcvP family. As to quaternary structure, the glycine cleavage system is composed of four proteins: P, T, L and H. Pyridoxal 5'-phosphate serves as cofactor.

The catalysed reaction is N(6)-[(R)-lipoyl]-L-lysyl-[glycine-cleavage complex H protein] + glycine + H(+) = N(6)-[(R)-S(8)-aminomethyldihydrolipoyl]-L-lysyl-[glycine-cleavage complex H protein] + CO2. The glycine cleavage system catalyzes the degradation of glycine. The P protein binds the alpha-amino group of glycine through its pyridoxal phosphate cofactor; CO(2) is released and the remaining methylamine moiety is then transferred to the lipoamide cofactor of the H protein. This Variovorax paradoxus (strain S110) protein is Glycine dehydrogenase (decarboxylating).